Consider the following 483-residue polypeptide: 1-aminocyclopropane-1-carboxylate synthase 2 (483 aa).

At K275 the chain carries N6-(pyridoxal phosphate)lysine.

This sequence belongs to the class-I pyridoxal-phosphate-dependent aminotransferase family. The cofactor is pyridoxal 5'-phosphate.

It catalyses the reaction S-adenosyl-L-methionine = 1-aminocyclopropane-1-carboxylate + S-methyl-5'-thioadenosine + H(+). The protein operates within alkene biosynthesis; ethylene biosynthesis via S-adenosyl-L-methionine; ethylene from S-adenosyl-L-methionine: step 1/2. Its function is as follows. Catalyzes the formation of 1-aminocyclopropane-1-carboxylate, a direct precursor of ethylene in higher plants. Involved in defense response by producing ethylene after pathogen infection. Involved in several phosphate deficiency-induced adaptive responses, such as lateral root elongation. In Oryza sativa subsp. japonica (Rice), this protein is 1-aminocyclopropane-1-carboxylate synthase 2.